The following is a 530-amino-acid chain: Autoinducer-2 kinase (530 aa).

It belongs to the FGGY kinase family.

It is found in the cytoplasm. The catalysed reaction is (S)-4,5-dihydroxypentane-2,3-dione + ATP = (2S)-2-hydroxy-3,4-dioxopentyl phosphate + ADP + H(+). Its function is as follows. Catalyzes the phosphorylation of autoinducer-2 (AI-2) to phospho-AI-2, which subsequently inactivates the transcriptional regulator LsrR and leads to the transcription of the lsr operon. Phosphorylates the ring-open form of (S)-4,5-dihydroxypentane-2,3-dione (DPD), which is the precursor to all AI-2 signaling molecules, at the C5 position. The protein is Autoinducer-2 kinase of Salmonella paratyphi A (strain ATCC 9150 / SARB42).